Consider the following 468-residue polypeptide: GTPase Der (468 aa).

2 consecutive EngA-type G domains span residues 3–167 (PTLV…PYAE) and 179–352 (PVIA…TAAM). GTP contacts are provided by residues 9–16 (GRPNVGKS), 56–60 (DTGGF), 119–122 (NKAE), 185–192 (GRPNVGKS), 232–236 (DTAGL), and 297–300 (NKWD). The region spanning 353 to 437 (AHIPTPKLTR…PLRVEFRTGH (85 aa)) is the KH-like domain. The interval 434–468 (RTGHNPYAGKKAPPLTEEEARRAHSRRRRNRKKYG) is disordered. The span at 456-468 (AHSRRRRNRKKYG) shows a compositional bias: basic residues.

Belongs to the TRAFAC class TrmE-Era-EngA-EngB-Septin-like GTPase superfamily. EngA (Der) GTPase family. As to quaternary structure, associates with the 50S ribosomal subunit.

Functionally, GTPase that plays an essential role in the late steps of ribosome biogenesis. This is GTPase Der from Nitrosomonas eutropha (strain DSM 101675 / C91 / Nm57).